A 279-amino-acid chain; its full sequence is NAD kinase (279 aa).

Asp57 acts as the Proton acceptor in catalysis. NAD(+) contacts are provided by residues 57–58 (DG), 133–134 (NE), Arg159, Asp161, and 172–177 (TAYNKS).

Belongs to the NAD kinase family. A divalent metal cation serves as cofactor.

The protein resides in the cytoplasm. It catalyses the reaction NAD(+) + ATP = ADP + NADP(+) + H(+). Its function is as follows. Involved in the regulation of the intracellular balance of NAD and NADP, and is a key enzyme in the biosynthesis of NADP. Catalyzes specifically the phosphorylation on 2'-hydroxyl of the adenosine moiety of NAD to yield NADP. This chain is NAD kinase, found in Streptococcus pyogenes serotype M12 (strain MGAS2096).